Here is a 22-residue protein sequence, read N- to C-terminus: Large ribosomal subunit protein bL32 (22 aa).

The disordered stretch occupies residues 1 to 22; the sequence is CVPKRKVSPSXRNMRXAHDXLT.

It belongs to the bacterial ribosomal protein bL32 family.

The chain is Large ribosomal subunit protein bL32 (rpmF) from Brevundimonas vesicularis (Pseudomonas vesicularis).